The following is a 475-amino-acid chain: Ribulose bisphosphate carboxylase large chain (475 aa).

Asn-123 and Thr-173 together coordinate substrate. The Proton acceptor role is filled by Lys-175. Lys-177 is a binding site for substrate. Lys-201, Asp-203, and Glu-204 together coordinate Mg(2+). Residue Lys-201 is modified to N6-carboxylysine. His-294 acts as the Proton acceptor in catalysis. The substrate site is built by Arg-295, His-327, and Ser-379.

This sequence belongs to the RuBisCO large chain family. Type I subfamily. In terms of assembly, heterohexadecamer of 8 large chains and 8 small chains; disulfide-linked. The disulfide link is formed within the large subunit homodimers. Mg(2+) serves as cofactor. In terms of processing, the disulfide bond which can form in the large chain dimeric partners within the hexadecamer appears to be associated with oxidative stress and protein turnover.

The protein resides in the plastid. The protein localises to the chloroplast. It carries out the reaction 2 (2R)-3-phosphoglycerate + 2 H(+) = D-ribulose 1,5-bisphosphate + CO2 + H2O. The catalysed reaction is D-ribulose 1,5-bisphosphate + O2 = 2-phosphoglycolate + (2R)-3-phosphoglycerate + 2 H(+). Its function is as follows. RuBisCO catalyzes two reactions: the carboxylation of D-ribulose 1,5-bisphosphate, the primary event in carbon dioxide fixation, as well as the oxidative fragmentation of the pentose substrate in the photorespiration process. Both reactions occur simultaneously and in competition at the same active site. This chain is Ribulose bisphosphate carboxylase large chain, found in Euglena gracilis.